The chain runs to 313 residues: Probable 5-dehydro-4-deoxyglucarate dehydratase (313 aa).

The protein belongs to the DapA family.

It catalyses the reaction 5-dehydro-4-deoxy-D-glucarate + H(+) = 2,5-dioxopentanoate + CO2 + H2O. It functions in the pathway carbohydrate acid metabolism; D-glucarate degradation; 2,5-dioxopentanoate from D-glucarate: step 2/2. The polypeptide is Probable 5-dehydro-4-deoxyglucarate dehydratase (Bradyrhizobium sp. (strain BTAi1 / ATCC BAA-1182)).